Consider the following 268-residue polypeptide: 4-diphosphocytidyl-2-C-methyl-D-erythritol kinase (268 aa).

Residue Lys10 is part of the active site. An ATP-binding site is contributed by 101–111 (PTQAGLGGGST). Asp143 is a catalytic residue.

It belongs to the GHMP kinase family. IspE subfamily.

It carries out the reaction 4-CDP-2-C-methyl-D-erythritol + ATP = 4-CDP-2-C-methyl-D-erythritol 2-phosphate + ADP + H(+). Its pathway is isoprenoid biosynthesis; isopentenyl diphosphate biosynthesis via DXP pathway; isopentenyl diphosphate from 1-deoxy-D-xylulose 5-phosphate: step 3/6. In terms of biological role, catalyzes the phosphorylation of the position 2 hydroxy group of 4-diphosphocytidyl-2C-methyl-D-erythritol. This chain is 4-diphosphocytidyl-2-C-methyl-D-erythritol kinase, found in Helicobacter pylori (strain ATCC 700392 / 26695) (Campylobacter pylori).